The sequence spans 719 residues: MTDNNNLDSLIIDKDEYLNSPMNVVDKLFKFDQNNLNNGTVYKKFENVISEDQIYKSIPLVSTINQCDLNSGKLVKIRCMIQDIFDPQFCPSFNKIKNIETNEIRLEASKYKDKINLNDCEELIFDSFDSSTFDKTILYCIPIPCENKWVNNNNNNNNNNNNNNNNNNNNNNNNGNEQISSSLLNKKKRNIDDADMKNENDEENKKSKDQKSTTTTTTTTSKEGEEEGEEGEQLTKSKKLLTNNKIDINKIFNYPIPIDSNDENNLKTPFIVNIYDDDIIFDENNKAVTFKINEIIEFVGVVAKFNPTLQHQSSNSSDQGETTTTIIDLMSMLDVDEISTIPDTLIPQFHAITYRYLDPYKFNHLNPFSIDTNTTINNNNNNNNNNNNNNNNNNNNNNNNNNNNNNPNNNNPNNNNLNNNLIRNELIKFIKLFIVDELLSEYLLFHLISKVYSFTSGLSIGNFSMNISIPNDKEFQRLPQLIELLYEILLARSYRFSMSLENLNDMDVVPYKDYDRNRIVSGLLQLPKGTNLILDETQLTEGKVESQGIKVLNALNTLSIQQKVEYDFKYHPIEIQTDLPTISISFGKSLIKGTTQISINKSIQLPTINEINQQLIHSYNNDKLNQFRNYINHCKNLSFKISSPTTTTIAESDDATRHIQEDFVKSRQLDSKMTTDVFHYWLTLSRLVALSFNDQYIKIDKWNIMKSLEEKRKLTINNL.

Over residues 152–174 (NNNNNNNNNNNNNNNNNNNNNNN) the composition is skewed to low complexity. Disordered stretches follow at residues 152–179 (NNNNNNNNNNNNNNNNNNNNNNNGNEQI), 194–236 (ADMK…QLTK), and 375–416 (TINN…NNNN). Residues 194-211 (ADMKNENDEENKKSKDQK) are compositionally biased toward basic and acidic residues. Composition is skewed to low complexity over residues 212–221 (STTTTTTTTS) and 377–416 (NNNNNNNNNNNNNNNNNNNNNNNNNNNNNNPNNNNPNNNN).

It belongs to the MCMBP family. As to quaternary structure, interacts with the MCM complex.

It is found in the nucleus. Its function is as follows. Associated component of the MCM complex that acts as a regulator of DNA replication. Binds to the MCM complex during late S phase and may act by promoting the disassembly of the MCM complex from chromatin. The protein is Mini-chromosome maintenance complex-binding protein (mcmbp) of Dictyostelium discoideum (Social amoeba).